Here is a 193-residue protein sequence, read N- to C-terminus: Holliday junction branch migration complex subunit RuvA (193 aa).

The tract at residues 1–64 (MIGRIAGILL…EDAHLLYGFL (64 aa)) is domain I. The tract at residues 65–139 (TPQERTTFRE…GKLGADLGAL (75 aa)) is domain II. The segment at 139-143 (LAGAA) is flexible linker. Residues 144 to 193 (SQSDHATDILNALVALGYSEKEGLAAIKNVPAGTGVSEGIKLALKALSKV) form a domain III region.

This sequence belongs to the RuvA family. In terms of assembly, homotetramer. Forms an RuvA(8)-RuvB(12)-Holliday junction (HJ) complex. HJ DNA is sandwiched between 2 RuvA tetramers; dsDNA enters through RuvA and exits via RuvB. An RuvB hexamer assembles on each DNA strand where it exits the tetramer. Each RuvB hexamer is contacted by two RuvA subunits (via domain III) on 2 adjacent RuvB subunits; this complex drives branch migration. In the full resolvosome a probable DNA-RuvA(4)-RuvB(12)-RuvC(2) complex forms which resolves the HJ.

It localises to the cytoplasm. In terms of biological role, the RuvA-RuvB-RuvC complex processes Holliday junction (HJ) DNA during genetic recombination and DNA repair, while the RuvA-RuvB complex plays an important role in the rescue of blocked DNA replication forks via replication fork reversal (RFR). RuvA specifically binds to HJ cruciform DNA, conferring on it an open structure. The RuvB hexamer acts as an ATP-dependent pump, pulling dsDNA into and through the RuvAB complex. HJ branch migration allows RuvC to scan DNA until it finds its consensus sequence, where it cleaves and resolves the cruciform DNA. This chain is Holliday junction branch migration complex subunit RuvA, found in Burkholderia ambifaria (strain MC40-6).